A 160-amino-acid polypeptide reads, in one-letter code: Cyclic pyranopterin monophosphate synthase (160 aa).

Residues 75-77 (LCH) and 113-114 (ME) each bind substrate. The active site involves aspartate 128.

It belongs to the MoaC family. Homohexamer; trimer of dimers.

It carries out the reaction (8S)-3',8-cyclo-7,8-dihydroguanosine 5'-triphosphate = cyclic pyranopterin phosphate + diphosphate. The protein operates within cofactor biosynthesis; molybdopterin biosynthesis. Functionally, catalyzes the conversion of (8S)-3',8-cyclo-7,8-dihydroguanosine 5'-triphosphate to cyclic pyranopterin monophosphate (cPMP). This is Cyclic pyranopterin monophosphate synthase from Ruthia magnifica subsp. Calyptogena magnifica.